A 389-amino-acid chain; its full sequence is Large envelope protein (389 aa).

Methionine 1 carries the N-acetylmethionine modification. Residue glycine 2 is the site of N-myristoyl glycine; by host attachment. The segment at 2–108 (GQNLSTSNPL…PPLRDTHPQA (107 aa)) is pre-S1. The tract at residues 2–163 (GQNLSTSNPL…FSRTGDPAPN (162 aa)) is pre-S. Residues 2–170 (GQNLSTSNPL…APNMESITSG (169 aa)) lie on the Virion surface; in external conformation side of the membrane. At 2–242 (GQNLSTSNPL…PGYRWMCLRR (241 aa)) the chain is on the intravirion; in internal conformation side. Positions 73–99 (IITTVPANPPPASTNRQSGRKPTPISP) are disordered. Residues 109-163 (MHWNSTTFHQALQDPRVRGLYFPAGGSSSGTAYPVPDTASHISSIFSRTGDPAPN) form a pre-S2 region. Residues 171–191 (FLGPLLVLQAGFFLLTKILTI) form a helical membrane-spanning segment. At 192–242 (PQSLDSWWTSLNFLGGAPVCLGQNSQSPTSNHSPTSCPPICPGYRWMCLRR) the chain is on the intravirion; in external conformation side. A helical transmembrane segment spans residues 243-263 (FIIFLFILLLCLIFLLVLLDY). Over 264–337 (QGMLPVCPLI…WASVRFSWLS (74 aa)) the chain is Virion surface. Asparagine 309 is a glycosylation site (N-linked (GlcNAc...) asparagine; by host). Residues 338–358 (LLAPFVQWFAGLSPTVWLSVI) traverse the membrane as a helical segment. The Intravirion portion of the chain corresponds to 359-364 (WMMWYW). Residues 365–387 (GPNLYNILSPFIPLLPIFFCLWV) form a helical membrane-spanning segment. The Virion surface segment spans residues 388–389 (YI).

This sequence belongs to the orthohepadnavirus major surface antigen family. In its internal form (Li-HBsAg), interacts with the capsid protein and with the isoform S. Interacts with host chaperone CANX. As to quaternary structure, associates with host chaperone CANX through its pre-S2 N glycan; this association may be essential for isoform M proper secretion. In terms of assembly, interacts with isoform L. Interacts with the antigens of satellite virus HDV (HDVAgs); this interaction is required for encapsidation of HDV genomic RNA. In terms of processing, isoform M is N-terminally acetylated by host at a ratio of 90%, and N-glycosylated by host at the pre-S2 region. Post-translationally, myristoylated.

Its subcellular location is the virion membrane. Functionally, the large envelope protein exists in two topological conformations, one which is termed 'external' or Le-HBsAg and the other 'internal' or Li-HBsAg. In its external conformation the protein attaches the virus to cell receptors and thereby initiating infection. This interaction determines the species specificity and liver tropism. This attachment induces virion internalization predominantly through caveolin-mediated endocytosis. The large envelope protein also assures fusion between virion membrane and endosomal membrane. In its internal conformation the protein plays a role in virion morphogenesis and mediates the contact with the nucleocapsid like a matrix protein. Its function is as follows. The middle envelope protein plays an important role in the budding of the virion. It is involved in the induction of budding in a nucleocapsid independent way. In this process the majority of envelope proteins bud to form subviral lipoprotein particles of 22 nm of diameter that do not contain a nucleocapsid. The sequence is that of Large envelope protein from Gorilla gorilla (western gorilla).